The sequence spans 353 residues: Quinolinate synthase (353 aa).

Iminosuccinate is bound by residues His-47 and Ser-68. Cys-113 lines the [4Fe-4S] cluster pocket. Residues 139 to 141 and Ser-156 each bind iminosuccinate; that span reads YAN. Residue Cys-200 participates in [4Fe-4S] cluster binding. Iminosuccinate-binding positions include 226–228 and Thr-243; that span reads HPE. Residue Cys-297 participates in [4Fe-4S] cluster binding.

This sequence belongs to the quinolinate synthase family. Type 1 subfamily. Requires [4Fe-4S] cluster as cofactor.

It is found in the cytoplasm. The catalysed reaction is iminosuccinate + dihydroxyacetone phosphate = quinolinate + phosphate + 2 H2O + H(+). Its pathway is cofactor biosynthesis; NAD(+) biosynthesis; quinolinate from iminoaspartate: step 1/1. Its function is as follows. Catalyzes the condensation of iminoaspartate with dihydroxyacetone phosphate to form quinolinate. This is Quinolinate synthase from Serratia proteamaculans (strain 568).